The primary structure comprises 506 residues: Bone morphogenetic protein 6 (506 aa).

A signal peptide spans 1–20 (MPGLGRRAQWLCWWWGLLCS). Positions 21–367 (CGPPPLRPPL…VSEVHVRTTR (347 aa)) are excised as a propeptide. Disordered stretches follow at residues 44–64 (AGGSPVRAEQPPPQSSSSGFL), 87–125 (PHRPRPLHGLQQPQSPVLPQQQQSQQTAREEPPPGRLKS), and 139–195 (KDDE…PLTS). The span at 96-112 (LQQPQSPVLPQQQQSQQ) shows a compositional bias: low complexity. Residues 140–153 (DDEEDGVSEGEGLE) are compositionally biased toward acidic residues. 5 N-linked (GlcNAc...) asparagine glycosylation sites follow: asparagine 234, asparagine 262, asparagine 379, asparagine 397, and asparagine 447. The disordered stretch occupies residues 366–397 (TRSASSRRRQQSRNRSTQSQDVSRGSSASDYN). Over residues 386–397 (DVSRGSSASDYN) the composition is skewed to polar residues. 3 cysteine pairs are disulfide-bonded: cysteine 405–cysteine 471, cysteine 434–cysteine 503, and cysteine 438–cysteine 505.

Belongs to the TGF-beta family. In terms of assembly, interacts with SOSTDC1. Interacts (when glycosylated) with type I receptor ACVR1; the interaction may induce HAMP expression. Interacts with type II receptor ACVR2B. Interacts with Hemojuvelin/HJV. Interacts with ERFE; the interaction inhibits BMP-induced transcription of HAMP. Interacts with BMPR1A/ALK3. Forms heterodimers with BMP2 in vitro; the heterodimer then binds to its receptor BMPR1A /ALK3 and may induce HAMP expression.

It is found in the secreted. Its function is as follows. Growth factor of the TGF-beta superfamily that plays essential roles in many developmental processes including cartilage and bone formation. Also plays an important role in the regulation of HAMP/hepcidin expression and iron metabolism by acting as a ligand for hemojuvelin/HJV. Also acts to promote expression of HAMP, potentially via the interaction with its receptor BMPR1A/ALK3. Initiates the canonical BMP signaling cascade by associating with type I receptor ACVR1 and type II receptor ACVR2B. In turn, ACVR1 propagates signal by phosphorylating SMAD1/5/8 that travel to the nucleus and act as activators and repressors of transcription of target. Can also signal through non-canonical pathway such as TAZ-Hippo signaling cascade to modulate VEGF signaling by regulating VEGFR2 expression. This chain is Bone morphogenetic protein 6 (Bmp6), found in Rattus norvegicus (Rat).